Reading from the N-terminus, the 576-residue chain is Proton pump-interactor 3B (576 aa).

Residues 34-63 (SEVTTDEEEDTIFSGGDSSSGLAAEEDSSG) form a disordered region. 2 coiled-coil regions span residues 132-155 (RMVIEEKKKEFDTLLEALRNLRCT) and 205-241 (EKEASINRVKSMALELNEVKNELDAITWKINDLSDKL). Positions 369-381 (RSEKVHKMNREDS) are enriched in basic and acidic residues. Positions 369–395 (RSEKVHKMNREDSSSNSSEDGNVITDK) are disordered. A coiled-coil region spans residues 411–467 (KKKEEEIDEEALKERKREEQLEKARLVMERKRKLQEKAAAKAAIRAQKEAEKKLKAI). The chain crosses the membrane as a helical span at residues 555–575 (WVWGLSSAALAVSLVLVVLLL).

Belongs to the plant Proton pump-interactor protein family.

The protein localises to the cell membrane. It localises to the endoplasmic reticulum membrane. Its function is as follows. May regulate plasma membrane ATPase activity. This Arabidopsis thaliana (Mouse-ear cress) protein is Proton pump-interactor 3B (PPI3B).